The primary structure comprises 228 residues: Ribosomal RNA small subunit methyltransferase G (228 aa).

S-adenosyl-L-methionine is bound by residues Gly-89, Leu-94, 140 to 141 (VE), and Arg-159.

Belongs to the methyltransferase superfamily. RNA methyltransferase RsmG family.

The protein localises to the cytoplasm. It carries out the reaction guanosine(527) in 16S rRNA + S-adenosyl-L-methionine = N(7)-methylguanosine(527) in 16S rRNA + S-adenosyl-L-homocysteine. Specifically methylates the N7 position of guanine in position 527 of 16S rRNA. This is Ribosomal RNA small subunit methyltransferase G from Burkholderia vietnamiensis (strain G4 / LMG 22486) (Burkholderia cepacia (strain R1808)).